A 409-amino-acid chain; its full sequence is MSEEAPPEDDSYIVRVKAVVMSRDDSSGGWLPHEGGGLSRVGVSKVYPEGSGRSNFLIHGERLNDKLVLLECYLKKDLVYWKATPTFHHWLVDNRRFGLTFQSPADARAFDRGVRKAIEDLTEGSTTSSSTIHNEAELGDDDVFATSTDSSSNSSQKREPPVRTIASPLPGGHCRYSTLSNIDLPGFEHYPTEQSCARPHRHVSFPDDDDEIVRINPRERNWLTGYEDYRQAPIHRKYPDTESIDSYVRFAKSESTKHDYNYPYVDHTNFGISKDLKTSVINTQPSRCSSRRKDGERSRCIYCRDMFNHDENRRGQCQDAPDSVRNCIRRVSCMGFADCVLYHCMSDSEGDYTDACSCDTSDEKFCLRWMLLIPLSIIAPGMCCYLPLRACYNCGVMCGCCGGKHKAAG.

The region spanning 5–121 (APPEDDSYIV…RGVRKAIEDL (117 aa)) is the WH1 domain. Residues 121–170 (LTEGSTTSSSTIHNEAELGDDDVFATSTDSSSNSSQKREPPVRTIASPLP) are disordered. Polar residues predominate over residues 123–133 (EGSTTSSSTIH). Low complexity predominate over residues 146–155 (TSTDSSSNSS). Residues 199–253 (PHRHVSFPDDDDEIVRINPRERNWLTGYEDYRQAPIHRKYPDTESIDSYVRFAKS) enclose the KBD domain. One can recognise an SPR domain in the interval 299–407 (RCIYCRDMFN…CGCCGGKHKA (109 aa)).

The protein localises to the cell membrane. It localises to the cytoplasmic vesicle. It is found in the secretory vesicle membrane. The protein resides in the cytoplasm. Its function is as follows. Negatively regulates Ras signaling pathways and downstream activation of MAP kinases. The protein is Sprouty-related, EVH1 domain-containing protein 2 (spred2) of Xenopus tropicalis (Western clawed frog).